A 501-amino-acid polypeptide reads, in one-letter code: Cytochrome P450 71B25 (501 aa).

Residues 1–21 traverse the membrane as a helical segment; the sequence is MAILQSFLLLLSLPFLFTLIY. Residue Cys445 participates in heme binding.

This sequence belongs to the cytochrome P450 family. It depends on heme as a cofactor.

It is found in the membrane. In Arabidopsis thaliana (Mouse-ear cress), this protein is Cytochrome P450 71B25 (CYP71B25).